The chain runs to 210 residues: Putative methyltransferase ECU09_1500 (210 aa).

This sequence belongs to the methyltransferase superfamily.

This Encephalitozoon cuniculi (strain GB-M1) (Microsporidian parasite) protein is Putative methyltransferase ECU09_1500.